The primary structure comprises 310 residues: Putative S-adenosyl-L-methionine-dependent methyltransferase MUL_2766 (310 aa).

S-adenosyl-L-methionine-binding positions include Asp131 and 160–161; that span reads DL.

The protein belongs to the UPF0677 family.

Exhibits S-adenosyl-L-methionine-dependent methyltransferase activity. The protein is Putative S-adenosyl-L-methionine-dependent methyltransferase MUL_2766 of Mycobacterium ulcerans (strain Agy99).